The sequence spans 289 residues: MAPAAASLTAPNALAATSLPFLHGRKSGGGGVSVHAGAPSPSRAVAVVARRLWGSASSSRRMVVAAATAAEMAPAASGEEGKPFVEEMRAVAMRLHTKDQAKEGEKEPQAPPVARWEPSVDGYLRFLVDSKLVFETLETIVDRAAVPWYAEFRNTGLERSEQLKKDLEWFKEQGHTIPEPSAPGTTYASYLEELAEKDSQAFICHFYNVYFAHTAGGRMIGKKVSENILNKKELEFYKWEGNLSQLLQNVRNKLNEVASSWTREEKDHCLDETEKSFSYSGDLLRHIFT.

A chloroplast-targeting transit peptide spans 1 to 64; sequence MAPAAASLTA…SASSSRRMVV (64 aa). A heme b-binding site is contributed by H96.

It belongs to the heme oxygenase family.

It localises to the plastid. Its subcellular location is the chloroplast. It carries out the reaction heme b + 3 reduced [NADPH--hemoprotein reductase] + 3 O2 = biliverdin IXalpha + CO + Fe(2+) + 3 oxidized [NADPH--hemoprotein reductase] + 3 H2O + H(+). Its function is as follows. Catalyzes the opening of the heme ring to form the open-chain tetrapyrrole biliverdin IX with the release of iron and carbon monoxide (CO). Is a key enzyme in the synthesis of the chromophore of the phytochrome family of plant photoreceptors. Essential for photoperiod response and repression of flowering through cytochromes that inhibit flowering by affecting both HD1 and EHD1 flowering pathways. The sequence is that of Heme oxygenase 1, chloroplastic (HO1) from Oryza sativa subsp. japonica (Rice).